The sequence spans 435 residues: Serine--tRNA ligase (435 aa).

Residues 48–68 (MKAQRNEASKKIGEAKRNGES) are disordered. Basic and acidic residues predominate over residues 49 to 68 (KAQRNEASKKIGEAKRNGES). 230–232 (TAE) lines the L-serine pocket. 261 to 263 (RSE) lines the ATP pocket. Glu-284 is a binding site for L-serine. 348–351 (EVSS) contributes to the ATP binding site. Ser-383 is an L-serine binding site.

This sequence belongs to the class-II aminoacyl-tRNA synthetase family. Type-1 seryl-tRNA synthetase subfamily. In terms of assembly, homodimer. The tRNA molecule binds across the dimer.

Its subcellular location is the cytoplasm. The catalysed reaction is tRNA(Ser) + L-serine + ATP = L-seryl-tRNA(Ser) + AMP + diphosphate + H(+). It catalyses the reaction tRNA(Sec) + L-serine + ATP = L-seryl-tRNA(Sec) + AMP + diphosphate + H(+). The protein operates within aminoacyl-tRNA biosynthesis; selenocysteinyl-tRNA(Sec) biosynthesis; L-seryl-tRNA(Sec) from L-serine and tRNA(Sec): step 1/1. In terms of biological role, catalyzes the attachment of serine to tRNA(Ser). Is also able to aminoacylate tRNA(Sec) with serine, to form the misacylated tRNA L-seryl-tRNA(Sec), which will be further converted into selenocysteinyl-tRNA(Sec). The polypeptide is Serine--tRNA ligase (Limosilactobacillus reuteri (strain DSM 20016) (Lactobacillus reuteri)).